Reading from the N-terminus, the 1195-residue chain is Phosphatidylinositol-3,5-bisphosphate 3-phosphatase MTMR4 (1195 aa).

A Phosphoserine modification is found at S8. The Myotubularin phosphatase domain occupies 153–570; the sequence is EHIRCRQEAE…RALHLWTAVY (418 aa). A 1,2-diacyl-sn-glycero-3-phospho-(1D-myo-inositol-3,5-bisphosphate) contacts are provided by N320, N345, and I346. The a 1,2-diacyl-sn-glycero-3-phospho-(1D-myo-inositol-3-phosphate) site is built by N320, N345, and I346. C407 (phosphocysteine intermediate) is an active-site residue. A 1,2-diacyl-sn-glycero-3-phospho-(1D-myo-inositol-3,5-bisphosphate) is bound by residues S408, D409, G410, W411, D412, R413, K449, and R453. The a 1,2-diacyl-sn-glycero-3-phospho-(1D-myo-inositol-3-phosphate) site is built by S408, D409, G410, W411, D412, and R413. R453 is an a 1,2-diacyl-sn-glycero-3-phospho-(1D-myo-inositol-3-phosphate) binding site. S610 and S629 each carry phosphoserine. Disordered regions lie at residues 645–756, 780–800, and 827–877; these read EPWH…EHCP, ESSQ…SMLG, and DPST…LLEN. The span at 720–729 shows a compositional bias: basic and acidic residues; sequence PEIKVLEETK. Composition is skewed to polar residues over residues 780–795 and 831–854; these read ESSQ…QAQP and DFLN…SSVP. Positions 1004–1008 match the PY-motif; substrate motif for NEDD4 motif; that stretch reads VPPLY. The stretch at 1023–1055 forms a coiled coil; sequence HRLRQIEAGYKQEVEQLRRQVRELQMRLDIRHC. The FYVE-type zinc-finger motif lies at 1114–1174; that stretch reads DHMASHCYNC…VCNSCYEHIQ (61 aa). Zn(2+) contacts are provided by C1120, C1123, C1136, C1139, C1144, C1147, C1166, and C1169.

Belongs to the protein-tyrosine phosphatase family. Non-receptor class myotubularin subfamily. In terms of assembly, homooligomeric. Forms MTMR3:MTMR4 heterooligomers; regulates the localization of both proteins. The MTMR3:MTMR4 heterooligomer can also recruit both CEP55 and PLK1; occurs during early mitosis, regulates the phosphorylation of CEP55 by PLK1 and its recruitment to the midbody where it can mediate cell abscission. Interacts with SMAD2 and SMAD3; negatively regulates TGF-beta signaling through SMAD2 and SMAD3 dephosphorylation and retention in endosomes. Interacts with SMAD1; negatively regulates BMP signaling through SMAD1 dephosphorylation and retention in endosomes. In terms of processing, ubiquitinated. Ubiquitination by NEDD4 probably leads to proteasomal degradation. Phosphorylated by CDK1 during mitosis. As to expression, expressed in brain, heart, kidney, spleen, liver, colon, testis, muscle, placenta, thyroid gland, pancreas, ovary, prostate, skin, peripheral blood, and bone marrow.

It is found in the early endosome membrane. It localises to the recycling endosome membrane. The protein resides in the late endosome membrane. The protein localises to the cytoplasmic vesicle. Its subcellular location is the phagosome membrane. It carries out the reaction a 1,2-diacyl-sn-glycero-3-phospho-(1D-myo-inositol-3-phosphate) + H2O = a 1,2-diacyl-sn-glycero-3-phospho-(1D-myo-inositol) + phosphate. The catalysed reaction is a 1,2-diacyl-sn-glycero-3-phospho-(1D-myo-inositol-3,5-bisphosphate) + H2O = a 1,2-diacyl-sn-glycero-3-phospho-(1D-myo-inositol-5-phosphate) + phosphate. The enzyme catalyses 1,2-dioctanoyl-sn-glycero-3-phospho-(1-D-myo-inositol-3-phosphate) + H2O = 1,2-dioctanoyl-sn-glycero-3-phospho-(1D-myo-inositol) + phosphate. It catalyses the reaction 1,2-dioctanoyl-sn-glycero-3-phospho-(1D-myo-inositol-3,5-bisphosphate) + H2O = 1,2-dioctanoyl-sn-glycero-3-phospho-(1D-myo-inositol-5-phosphate) + phosphate. The phosphatidylinositol-3-phosphate phosphatase activity is inhibited by vanadate. Lipid phosphatase that specifically dephosphorylates the D-3 position of phosphatidylinositol 3-phosphate and phosphatidylinositol 3,5-bisphosphate, generating phosphatidylinositol and phosphatidylinositol 5-phosphate. Decreases the levels of phosphatidylinositol 3-phosphate, a phospholipid found in cell membranes where it acts as key regulator of both cell signaling and intracellular membrane traffic, in a subset of endosomal membranes to negatively regulate both endocytic recycling and trafficking and/or maturation of endosomes toward lysosomes. Through phosphatidylinositol 3-phosphate turnover in phagosome membranes regulates phagocytosis and phagosome maturation. By decreasing phosphatidylinositol 3-monophosphate (PI3P) levels in immune cells it can also regulate the innate immune response. Beside its lipid phosphatase activity, can also function as a molecular adapter to regulate midbody abscission during mitotic cytokinesis. Can also negatively regulate TGF-beta and BMP signaling through Smad proteins dephosphorylation and retention in endosomes. This is Phosphatidylinositol-3,5-bisphosphate 3-phosphatase MTMR4 from Homo sapiens (Human).